A 1850-amino-acid polypeptide reads, in one-letter code: Voltage-dependent L-type calcium channel subunit alpha-1S (1850 aa).

The tract at residues M1 to I23 is disordered. Residues M1 to K51 are Cytoplasmic-facing. The stretch at N38 to F337 is one I repeat. A helical membrane pass occupies residues P52–V70. Residues Y71–G85 lie on the Extracellular side of the membrane. A helical membrane pass occupies residues L86–I106. At A107 to D115 the chain is on the cytoplasmic side. A helical membrane pass occupies residues A116 to T136. Residues A137–D160 are Extracellular-facing. A helical membrane pass occupies residues V161–V179. The Cytoplasmic portion of the chain corresponds to P180–L196. A helical transmembrane segment spans residues F197–F218. At K219–G279 the chain is on the extracellular side. Cystine bridges form between C226–C254 and C245–C261. The segment at residues F280 to V301 is an intramembrane region (pore-forming). The Selectivity filter of repeat I motif lies at S290 to G293. Residue E292 coordinates Ca(2+). The Extracellular portion of the chain corresponds to N302–W309. Residues P310–L330 form a helical membrane-spanning segment. The Cytoplasmic segment spans residues G331–K432. The binding to the beta subunit stretch occupies residues Q357–E374. S393 and S397 each carry phosphoserine. An II repeat occupies N418–L664. Residues V433–S451 traverse the membrane as a helical segment. The Extracellular segment spans residues E452–H462. A helical transmembrane segment spans residues L463–M483. Residues Y484 to S494 are Cytoplasmic-facing. A helical transmembrane segment spans residues I495–V514. Residues E515–G523 are Extracellular-facing. Residues I524–W542 traverse the membrane as a helical segment. Over T543–S561 the chain is Cytoplasmic. The helical transmembrane segment at L562–F581 threads the bilayer. Topologically, residues G582 to P601 are extracellular. The segment at residues Q602–G623 is an intramembrane region (pore-forming). The Selectivity filter of repeat II signature appears at T612–D615. E614 contacts Ca(2+). Residues I624–P633 lie on the Extracellular side of the membrane. Residues G634–L653 traverse the membrane as a helical segment. Residues N654–T799 lie on the Cytoplasmic side of the membrane. Disordered stretches follow at residues A673–T717 and E731–P758. The residue at position 687 (S687) is a Phosphoserine; by PKA. Residues L690 to G711 are compositionally biased toward basic and acidic residues. Residues P742–E751 show a composition bias toward acidic residues. The III repeat unit spans residues N786–F1068. The chain crosses the membrane as a helical span at residues W800 to A818. Over E819–Q830 the chain is Extracellular. The chain crosses the membrane as a helical span at residues I831 to K850. The Cytoplasmic segment spans residues M851–N866. A helical membrane pass occupies residues Y867–L885. The Extracellular portion of the chain corresponds to E886–V892. Residues V893–A911 traverse the membrane as a helical segment. The Cytoplasmic portion of the chain corresponds to K912 to N930. A helical transmembrane segment spans residues I931–F950. Topologically, residues K951 to V1000 are extracellular. The cysteines at positions 957 and 968 are disulfide-linked. Positions R988–K1077 are dihydropyridine binding. The segment at residues L1001–Y1021 is an intramembrane region (pore-forming). The Selectivity filter of repeat III motif lies at T1012–G1015. E1014 serves as a coordination point for Ca(2+). Over K1022–R1038 the chain is Extracellular. The chain crosses the membrane as a helical span at residues V1039–F1060. At V1061 to S1118 the chain is on the cytoplasmic side. The stretch at N1105–F1384 is one IV repeat. A helical transmembrane segment spans residues Y1119–Y1140. N-linked (GlcNAc...) asparagine glycosylation occurs at N1141. At N1141–H1148 the chain is on the extracellular side. A helical transmembrane segment spans residues I1149 to I1170. Over A1171 to D1180 the chain is Cytoplasmic. Residues P1181–S1200 form a helical membrane-spanning segment. Residues E1201–S1231 lie on the Extracellular side of the membrane. Residues S1232 to A1250 form a helical membrane-spanning segment. At E1251–P1268 the chain is on the cytoplasmic side. Residues Y1269–F1289 form a helical membrane-spanning segment. Residues G1290–Q1311 lie on the Extracellular side of the membrane. Residues A1312–L1330 constitute an intramembrane region (pore-forming). The Selectivity filter of repeat IV motif lies at T1321–A1324. At A1331–F1356 the chain is on the extracellular side. Residues R1337 to K1403 are dihydropyridine binding. C1338 and C1352 are oxidised to a cystine. The phenylalkylamine binding stretch occupies residues E1349–W1391. The chain crosses the membrane as a helical span at residues A1357–M1381. Residues D1382–P1850 lie on the Cytoplasmic side of the membrane. Residues K1522 to E1542 form an interaction with calmodulin region. Residue S1575 is modified to Phosphoserine; by PKA and CAMK2. The residue at position 1579 (T1579) is a Phosphothreonine. Residue S1617 is modified to Phosphoserine; by PKA. The disordered stretch occupies residues P1697–A1779. Over residues Q1706–R1716 the composition is skewed to polar residues. 2 stretches are compositionally biased toward basic and acidic residues: residues S1717 to M1726 and Q1745 to G1756.

The protein belongs to the calcium channel alpha-1 subunit (TC 1.A.1.11) family. CACNA1S subfamily. Component of a calcium channel complex consisting of a pore-forming alpha subunit (CACNA1S) and the ancillary subunits CACNB1 or CACNB2, CACNG1 and CACNA2D1. The channel complex contains alpha, beta, gamma and delta subunits in a 1:1:1:1 ratio, i.e. it contains either CACNB1 or CACNB2. CACNA1S channel activity is modulated by the auxiliary subunits (CACNB1 or CACNB2, CACNG1 and CACNA2D1). Interacts with DYSF and JSRP1. Interacts with RYR1. Interacts with STAC, STAC2 and STAC3 (via their SH3 domains). Interacts with CALM. The alpha-1S subunit is found in two isoforms in the skeletal muscle: a minor form of 212 kDa containing the complete amino acid sequence, and a major form of 190 kDa derived from the full-length form by post-translational proteolysis close to Phe-1690. Post-translationally, phosphorylated. Phosphorylation by PKA activates the calcium channel. Both the minor and major forms are phosphorylated in vitro by PKA. Phosphorylation at Ser-1575 is involved in beta-adrenergic-mediated regulation of the channel. Skeletal muscle specific.

Its subcellular location is the cell membrane. It is found in the sarcolemma. The protein localises to the T-tubule. It catalyses the reaction Ca(2+)(in) = Ca(2+)(out). With respect to regulation, channel activity is blocked by dihydropyridines (DHP), phenylalkylamines, and by benzothiazepines. Pore-forming, alpha-1S subunit of the voltage-gated calcium channel that gives rise to L-type calcium currents in skeletal muscle. Calcium channels containing the alpha-1S subunit play an important role in excitation-contraction coupling in skeletal muscle via their interaction with RYR1, which triggers Ca(2+) release from the sarcplasmic reticulum and ultimately results in muscle contraction. Long-lasting (L-type) calcium channels belong to the 'high-voltage activated' (HVA) group. The sequence is that of Voltage-dependent L-type calcium channel subunit alpha-1S (Cacna1s) from Rattus norvegicus (Rat).